Here is a 115-residue protein sequence, read N- to C-terminus: MGILIGTFPPRRRPTLHETENHVKKKNWRCGKGIKCFFKPSDQVYLVGQVDCRFLLHHNAKNKQFPLIFVTNFITSLPNFQFPLFFFVSLLHLYRRPRNQISTRKYTPHTQSGRR.

Has a role in meiosis. The chain is Meiotically up-regulated gene 42 protein (mug42) from Schizosaccharomyces pombe (strain 972 / ATCC 24843) (Fission yeast).